The primary structure comprises 90 residues: Probable Fe(2+)-trafficking protein (90 aa).

Belongs to the Fe(2+)-trafficking protein family. Monomer.

Functionally, could be a mediator in iron transactions between iron acquisition and iron-requiring processes, such as synthesis and/or repair of Fe-S clusters in biosynthetic enzymes. This is Probable Fe(2+)-trafficking protein from Edwardsiella ictaluri (strain 93-146).